Here is a 576-residue protein sequence, read N- to C-terminus: Sulfite reductase [NADPH] hemoprotein beta-component (576 aa).

C435, C441, C480, and C484 together coordinate [4Fe-4S] cluster. C484 provides a ligand contact to siroheme.

It belongs to the nitrite and sulfite reductase 4Fe-4S domain family. As to quaternary structure, alpha(8)-beta(8). The alpha component is a flavoprotein, the beta component is a hemoprotein. Siroheme serves as cofactor. The cofactor is [4Fe-4S] cluster.

It catalyses the reaction hydrogen sulfide + 3 NADP(+) + 3 H2O = sulfite + 3 NADPH + 4 H(+). It functions in the pathway sulfur metabolism; hydrogen sulfide biosynthesis; hydrogen sulfide from sulfite (NADPH route): step 1/1. Its function is as follows. Component of the sulfite reductase complex that catalyzes the 6-electron reduction of sulfite to sulfide. This is one of several activities required for the biosynthesis of L-cysteine from sulfate. This is Sulfite reductase [NADPH] hemoprotein beta-component from Yersinia pseudotuberculosis serotype O:1b (strain IP 31758).